Here is a 392-residue protein sequence, read N- to C-terminus: Small ribosomal subunit protein bS1 (392 aa).

S1 motif domains follow at residues 16 to 90 (GDKV…LSKR), 108 to 173 (DEII…LSRK), 194 to 262 (GDVI…LSIK), and 279 to 348 (DDVI…LSIK).

The protein belongs to the bacterial ribosomal protein bS1 family.

Binds mRNA; thus facilitating recognition of the initiation point. It is needed to translate mRNA with a short Shine-Dalgarno (SD) purine-rich sequence. This is Small ribosomal subunit protein bS1 (rpsA) from Staphylococcus haemolyticus (strain JCSC1435).